The primary structure comprises 112 residues: Hydrogenase maturation factor HypA (112 aa).

Residue His-2 participates in Ni(2+) binding. Residues Cys-72, Cys-75, Cys-88, and Cys-91 each contribute to the Zn(2+) site.

It belongs to the HypA/HybF family.

Involved in the maturation of [NiFe] hydrogenases. Required for nickel insertion into the metal center of the hydrogenase. This is Hydrogenase maturation factor HypA from Francisella philomiragia subsp. philomiragia (strain ATCC 25017 / CCUG 19701 / FSC 153 / O#319-036).